The following is a 63-amino-acid chain: Arabinogalactan protein 41 (63 aa).

Positions Met1–Ala27 are cleaved as a signal peptide. Pyrrolidone carboxylic acid is present on Gln28. Residues Pro32, Pro34, and Pro36 each carry the 4-hydroxyproline modification. O-linked (Ara...) hydroxyproline glycans are attached at residues Pro32, Pro34, and Pro36. Ser38 carries GPI-anchor amidated serine lipidation. Positions Asp39 to His63 are cleaved as a propeptide — removed in mature form.

The protein belongs to the AG-peptide AGP family. Contains 4-hydroxyproline; hydroxylated on Pro-32, Pro-34 and Pro-36. In terms of processing, O-glycosylated on hydroxyprolines; noncontiguous hydroxylproline residues are glycosylated with arabinogalactan.

The protein localises to the cell membrane. Proteoglycan that seems to be implicated in diverse developmental roles such as differentiation, cell-cell recognition, embryogenesis and programmed cell death. This Arabidopsis thaliana (Mouse-ear cress) protein is Arabinogalactan protein 41.